A 388-amino-acid polypeptide reads, in one-letter code: Processive diacylglycerol beta-glucosyltransferase (388 aa).

It belongs to the glycosyltransferase 28 family. UgtP subfamily.

It is found in the cell membrane. The enzyme catalyses a 1,2-diacyl-3-O-(beta-D-glucopyranosyl)-sn-glycerol + UDP-alpha-D-glucose = a 1,2-diacyl-3-O-(beta-D-Glc-(1-&gt;6)-beta-D-Glc)-sn-glycerol + UDP + H(+). It carries out the reaction a 1,2-diacyl-3-O-(beta-D-Glc-(1-&gt;6)-beta-D-Glc)-sn-glycerol + UDP-alpha-D-glucose = a 1,2-diacyl-3-O-(beta-D-Glc-(1-&gt;6)-beta-D-Glc-(1-&gt;6)-beta-D-Glc)-sn-glycerol + UDP + H(+). The catalysed reaction is a 1,2-diacyl-sn-glycerol + UDP-alpha-D-glucose = a 1,2-diacyl-3-O-(beta-D-glucopyranosyl)-sn-glycerol + UDP + H(+). The protein operates within glycolipid metabolism; diglucosyl-diacylglycerol biosynthesis. Functionally, processive glucosyltransferase involved in the biosynthesis of both the bilayer- and non-bilayer-forming membrane glucolipids. Is able to successively transfer up to three glucosyl residues to diacylglycerol (DAG), thereby catalyzing the formation of beta-monoglucosyl-DAG (3-O-(beta-D-glucopyranosyl)-1,2-diacyl-sn-glycerol), beta-diglucosyl-DAG (3-O-(beta-D-glucopyranosyl-beta-(1-&gt;6)-D-glucopyranosyl)-1,2-diacyl-sn-glycerol) and beta-triglucosyl-DAG (3-O-(beta-D-glucopyranosyl-beta-(1-&gt;6)-D-glucopyranosyl-beta-(1-&gt;6)-D-glucopyranosyl)-1,2-diacyl-sn-glycerol). Beta-diglucosyl-DAG is the predominant glycolipid found in Bacillales and is also used as a membrane anchor for lipoteichoic acid (LTA). The protein is Processive diacylglycerol beta-glucosyltransferase of Bacillus cereus (strain ATCC 10987 / NRS 248).